Reading from the N-terminus, the 164-residue chain is uncharacterized protein (164 aa).

S117 is subject to Phosphoserine.

This is an uncharacterized protein from Bacillus subtilis (strain 168).